Consider the following 500-residue polypeptide: Cytosol aminopeptidase (500 aa).

Residues lysine 265 and aspartate 270 each contribute to the Mn(2+) site. Lysine 277 is a catalytic residue. Aspartate 288, aspartate 347, and glutamate 349 together coordinate Mn(2+). Arginine 351 is an active-site residue.

Belongs to the peptidase M17 family. Mn(2+) is required as a cofactor.

It localises to the cytoplasm. The catalysed reaction is Release of an N-terminal amino acid, Xaa-|-Yaa-, in which Xaa is preferably Leu, but may be other amino acids including Pro although not Arg or Lys, and Yaa may be Pro. Amino acid amides and methyl esters are also readily hydrolyzed, but rates on arylamides are exceedingly low.. It carries out the reaction Release of an N-terminal amino acid, preferentially leucine, but not glutamic or aspartic acids.. Functionally, presumably involved in the processing and regular turnover of intracellular proteins. Catalyzes the removal of unsubstituted N-terminal amino acids from various peptides. The chain is Cytosol aminopeptidase (pepA) from Rickettsia prowazekii (strain Madrid E).